A 393-amino-acid chain; its full sequence is S-adenosylmethionine sensor upstream of mTORC1 (393 aa).

The interval 1 to 35 (MDLRSSAETDPDLSENHPGSVPAELQSRKQEQEKL) is disordered. Arg-94 provides a ligand contact to S-adenosyl-L-methionine. A disordered region spans residues 118–141 (DEKSARHATAGNANTDTNAPPQLS). Residues 125–136 (ATAGNANTDTNA) show a composition bias toward low complexity. Positions 160, 178, 190, 191, and 232 each coordinate S-adenosyl-L-methionine. The interval 362–393 (ELPETPYDSDSGESQSSSAPFYELEDPILLQS) is disordered.

This sequence belongs to the BMT2/SAMTOR family. In terms of assembly, interacts with the GATOR1 complex; interaction is disrupted when samtor binds S-adenosyl-L-methionine. Interacts with the KICSTOR complex; interaction is disrupted when bmt2/samtor binds S-adenosyl-L-methionine.

S-adenosyl-L-methionine-binding protein that acts as an inhibitor of mTORC1 signaling via interaction with the GATOR1 and KICSTOR complexes. Acts as a sensor of S-adenosyl-L-methionine to signal methionine sufficiency to mTORC1: in presence of methionine, binds S-adenosyl-L-methionine, leading to disrupt interaction with the GATOR1 and KICSTOR complexes and promote mTORC1 signaling. Upon methionine starvation, S-adenosyl-L-methionine levels are reduced, thereby promoting the association with GATOR1 and KICSTOR, leading to inhibit mTORC1 signaling. Probably also acts as a S-adenosyl-L-methionine-dependent methyltransferase. The protein is S-adenosylmethionine sensor upstream of mTORC1 of Danio rerio (Zebrafish).